Here is an 803-residue protein sequence, read N- to C-terminus: PR domain zinc finger protein 4 (803 aa).

Residues 408 to 532 form the SET domain; it reads KQLVLRQSIV…PESELLFYYS (125 aa). C2H2-type zinc fingers lie at residues 593–615, 621–643, 649–671, 677–699, and 705–727; these read WKCSMCPQAFISPSKLHVHFMGH, HKCDFCSKAFSDPSNLRTHLKIH, YRCTLCDKSFTQKAHLESHMVIH, LKCDYCDKLFMRRQDLKQHVLIH, and IKCPKCDKLFLRTNHLKKHLNSH. The C2H2-type 6; degenerate zinc finger occupies 733-755; sequence YVCEKCTKAYLTKYHLTRHLKTC. A disordered region spans residues 757–803; the sequence is EPSSSSSAQEEEDDESEEEDLADSMRTEDCRMGSAVYSTDESLSAHK. A compositionally biased stretch (acidic residues) spans 765–778; sequence QEEEDDESEEEDLA. Positions 792–803 are enriched in polar residues; that stretch reads VYSTDESLSAHK.

This sequence belongs to the class V-like SAM-binding methyltransferase superfamily.

It localises to the nucleus. May function as a transcription factor involved in cell differentiation. In Mus musculus (Mouse), this protein is PR domain zinc finger protein 4 (Prdm4).